Here is a 368-residue protein sequence, read N- to C-terminus: Cyclic di-GMP phosphodiesterase TM_0186 (368 aa).

Residues 2–114 form the Response regulatory domain; it reads TVLIVEDDDI…LLRLKITHAL (113 aa). Aspartate 49 carries the 4-aspartylphosphate modification. The HD-GYP domain maps to 148 to 345; sequence YEDFLFEVLE…ITDVYRREKD (198 aa). 8 residues coordinate a divalent metal cation: glutamate 169, histidine 173, histidine 205, aspartate 206, histidine 234, histidine 260, histidine 261, and aspartate 289. Positions 341–368 are disordered; it reads RREKDEDTSHNGGRSHQSSPGEGVEGIR. Polar residues predominate over residues 350-360; sequence HNGGRSHQSSP.

The enzyme catalyses 3',3'-c-di-GMP + 2 H2O = 2 GMP + 2 H(+). Can function in vivo with either divalent iron or manganese occupying di- and trimetal sites. Dimetal is necessary and sufficient to catalyze conversion of c-di-GMP to pGpG, but conversion of pGpG to GMP requires an occupied trimetal site. In terms of biological role, phosphodiesterase (PDE) that catalyzes the hydrolysis of cyclic diguanylate (c-di-GMP) to GMP. Hydrolyzes c-di-GMP to GMP in a two-step reaction, via the linear intermediate 5'-phosphoguanylyl(3'-&gt;5')guanosine (pGpG). This is Cyclic di-GMP phosphodiesterase TM_0186 from Thermotoga maritima (strain ATCC 43589 / DSM 3109 / JCM 10099 / NBRC 100826 / MSB8).